The chain runs to 463 residues: Type I restriction enzyme StySPI specificity subunit (463 aa).

It belongs to the type-I restriction system S methylase family. In terms of assembly, the type I restriction/modification system is composed of three polypeptides R, M and S; the restriction enzyme has stoichiometry R(2)M(2)S(1) while the methyltransferase is M(2)S(1).

Functionally, the specificity (S) subunit of a type I restriction enzyme; this subunit dictates DNA sequence specificity. The M and S subunits together form a methyltransferase (MTase) that methylates A-2 on the top strand and A-3 on the bottom strand of the sequence 5'-AACN(6)GTRC-3'. In the presence of the R subunit the complex can also act as an endonuclease, binding to the same target sequence but cutting the DNA some distance from this site. Whether the DNA is cut or modified depends on the methylation state of the target sequence. When the target site is unmodified, the DNA is cut. When the target site is hemimethylated, the complex acts as a maintenance MTase modifying the DNA so that both strands become methylated. After locating a non-methylated recognition site, the enzyme complex serves as a molecular motor that translocates DNA in an ATP-dependent manner until a collision occurs that triggers cleavage. This is Type I restriction enzyme StySPI specificity subunit from Salmonella potsdam.